A 456-amino-acid chain; its full sequence is Solute carrier family 38 member 6 (456 aa).

N-acetylmethionine is present on methionine 1. Serine 4 and serine 7 each carry phosphoserine. 5 helical membrane passes run 42–62 (SPGVSFGLSVFNLMNAIMGSG), 85–105 (VALLASYSVHLLLSMCIQTAV), 111–131 (LGLFAFGLPGKLVVAGTIIIQ), 170–190 (LLIIICVGIVFPLALLPKIGF), and 191–211 (LGYTSSLSFFFMMFFALVVII). An intrachain disulfide couples cysteine 218 to cysteine 238. Asparagine 233 is a glycosylation site (N-linked (GlcNAc...) asparagine). The helical transmembrane segment at 250 to 270 (AYALPTMAFSFLCHTSILPIY) threads the bilayer. N-linked (GlcNAc...) asparagine glycosylation is present at asparagine 283. 5 consecutive transmembrane segments (helical) span residues 288-308 (AIALSFLIYFISALFGYLTFY), 327-347 (VVVMTVKLCILFAVLLTVPLI), 371-391 (FLITLALNIIIVLLAIYVPDI), 394-414 (VFGVVGASTSTCLIFIFPGLF), and 431-451 (AFVLLIFGILVGNFSLALIIF).

The protein belongs to the amino acid/polyamine transporter 2 family.

The protein resides in the cell membrane. The protein localises to the synapse. It catalyses the reaction L-glutamine(out) = L-glutamine(in). The enzyme catalyses L-glutamate(out) = L-glutamate(in). Amino acid transporter with an apparent selectivity for L-glutamine and L-glutamate. May facilitate glutamine uptake in excitatory neurons. The transport mechanism remains to be elucidated. This is Solute carrier family 38 member 6 from Homo sapiens (Human).